Reading from the N-terminus, the 188-residue chain is Small ribosomal subunit protein bS18c (188 aa).

A compositionally biased stretch (low complexity) spans 1-19 (MNNQSFNNFSQVNSNSSFF). The interval 1–79 (MNNQSFNNFS…TSNKRKVLSV (79 aa)) is disordered. Positions 25–71 (NLQNTNLEMTNGTNPPSSFSKQTPQKRQSFGTNTNFSKGNSSRGSTS) are enriched in polar residues.

The protein belongs to the bacterial ribosomal protein bS18 family. In terms of assembly, part of the 30S ribosomal subunit.

The protein resides in the plastid. It is found in the chloroplast. In Tetradesmus obliquus (Green alga), this protein is Small ribosomal subunit protein bS18c.